Reading from the N-terminus, the 499-residue chain is Spore germination protein GerQA (499 aa).

The next 3 membrane-spanning stretches (helical) occupy residues 285 to 305, 376 to 396, and 409 to 429; these read LFAF…LTYH, SNVL…APIY, and FIIS…SLLL.

Belongs to the GerABKA family.

It is found in the membrane. In terms of biological role, required for the germination response to inosine. Has no role in L-alanine germination. The protein is Spore germination protein GerQA (gerQA) of Bacillus cereus.